The following is a 250-amino-acid chain: Triosephosphate isomerase (250 aa).

Asn-9–Lys-11 contributes to the substrate binding site. Residue His-96 is the Electrophile of the active site. Residue Glu-166 is the Proton acceptor of the active site. Substrate-binding positions include Gly-172, Ser-212, and Gly-233 to Gly-234.

It belongs to the triosephosphate isomerase family. As to quaternary structure, homodimer.

Its subcellular location is the cytoplasm. It carries out the reaction D-glyceraldehyde 3-phosphate = dihydroxyacetone phosphate. It participates in carbohydrate biosynthesis; gluconeogenesis. Its pathway is carbohydrate degradation; glycolysis; D-glyceraldehyde 3-phosphate from glycerone phosphate: step 1/1. Functionally, involved in the gluconeogenesis. Catalyzes stereospecifically the conversion of dihydroxyacetone phosphate (DHAP) to D-glyceraldehyde-3-phosphate (G3P). This Chlorobium luteolum (strain DSM 273 / BCRC 81028 / 2530) (Pelodictyon luteolum) protein is Triosephosphate isomerase.